The following is a 554-amino-acid chain: MQGPHLSPLVLLLATMGAVLQPEAVENLATNTRGLIFLEDELWPPSSPPEPLCLVTVRGEGNTSRASLRVVGGLNSYEYAFLEAVQESRWGPQDLATFGVCSTDSQATLPALQRLGAWLGETGEQQLLVLHLAEVIWEPELLLKFQEPPPGGASRWEQALLVLYPGPGPQVTVTGTGLRGTQNLCPTRDTRYLVLTVDFPAGAWSGSGLILTLQPSREGATLSIDQLQAFLFGSDSRCFTRMTPTLVVLPPAEPSPQPAHGQLDTMPFPQPGLSLEPEALPHSADPFLETLTRLVRALRGPLTQASNTQLALDPGALASFPQGLVNLSDPAALGRLLDWEEPLLLLLSPAAATEREPMPLHGPASAPWAAGLQRRVAVELQAAASELRDLPGLPPTAPPLLARLLALCPNDSRSSGDPLRALLLLKALQGLRAEWHGREGRGRTGRSAGTGTDGPCALRELSVDLRAERSVLIPETYQANNCQGACAWPQSDRNPRYGNHVVLLLKMQARGAALGRLPCCVPTAYAGKLLISLSEERISAHHVPNMVATECGCV.

A signal peptide spans 1 to 24; that stretch reads MQGPHLSPLVLLLATMGAVLQPEA. The propeptide occupies 25 to 446; it reads VENLATNTRG…GREGRGRTGR (422 aa). N-linked (GlcNAc...) asparagine glycans are attached at residues Asn62, Asn326, and Asn410. 3 disulfides stabilise this stretch: Cys456/Cys520, Cys482/Cys551, and Cys486/Cys553.

Belongs to the TGF-beta family. As to quaternary structure, homodimer; disulfide-linked. In terms of processing, preproprotein is proteolytically processed to generate N- and C-terminal cleavage products that homodimerize and associate to form a biologically active non-covalent complex. Binding of the non-covalent complex to AMHRII induces dissociation of the pro-region from the mature C-terminal dimer. The N-terminal portion of the protein, despite having no intrinsic activity, has the role of amplifying the activity of the C-terminus. In terms of tissue distribution, expressed in Sertoli cells of fetal testes, and in testes just after birth, but absent in adult testes. In female, AMH is expressed after birth in the granulosa cells of the follicle.

It is found in the secreted. Its function is as follows. Plays an important role in several reproductive functions, including Muellerian duct regression during male fetal sexua,l differentiation and in the adult plays a role in Leydig cell differentiation and function. In female acts as a negative regulator of the primordial to primary follicle transition and decreases FSH sensitivity of growing follicles. Binds to its sole type II receptor, AMHR2 that recruits type I receptors ACVR1 and BMPR1A which subsequently activates the Smad pathway. The polypeptide is Muellerian-inhibiting factor (Amh) (Mus musculus (Mouse)).